Consider the following 164-residue polypeptide: UPF0304 protein NT01EI_2691 (164 aa).

It belongs to the UPF0304 family.

The polypeptide is UPF0304 protein NT01EI_2691 (Edwardsiella ictaluri (strain 93-146)).